We begin with the raw amino-acid sequence, 169 residues long: Large ribosomal subunit protein uL5 (169 aa).

This sequence belongs to the universal ribosomal protein uL5 family. As to quaternary structure, part of the 50S ribosomal subunit; contacts the 5S rRNA and probably tRNA. Forms a bridge to the 30S subunit in the 70S ribosome.

In terms of biological role, this is one of the proteins that bind and probably mediate the attachment of the 5S RNA into the large ribosomal subunit, where it forms part of the central protuberance. In the 70S ribosome it contacts protein S13 of the 30S subunit (bridge B1b), connecting the 2 subunits; this bridge is implicated in subunit movement. May contact the P site tRNA; the 5S rRNA and some of its associated proteins might help stabilize positioning of ribosome-bound tRNAs. This chain is Large ribosomal subunit protein uL5, found in Nanoarchaeum equitans (strain Kin4-M).